The chain runs to 365 residues: Putative agmatine deiminase (365 aa).

The agmatine site is built by Glu214 and Asp220. Catalysis depends on Cys357, which acts as the Amidino-cysteine intermediate.

This sequence belongs to the agmatine deiminase family. Tetramer of two homodimers.

The catalysed reaction is agmatine + H2O = N-carbamoylputrescine + NH4(+). The protein is Putative agmatine deiminase of Enterococcus faecalis (strain ATCC 700802 / V583).